Consider the following 570-residue polypeptide: Urease subunit alpha (570 aa).

The region spanning 131–570 (GGMDSHIHFI…LPMAQRYFLF (440 aa)) is the Urease domain. Residues histidine 136, histidine 138, and lysine 219 each contribute to the Ni(2+) site. N6-carboxylysine is present on lysine 219. Histidine 221 serves as a coordination point for substrate. Histidine 248 and histidine 274 together coordinate Ni(2+). The active-site Proton donor is histidine 322. Aspartate 362 serves as a coordination point for Ni(2+).

It belongs to the metallo-dependent hydrolases superfamily. Urease alpha subunit family. In terms of assembly, heterotrimer of UreA (gamma), UreB (beta) and UreC (alpha) subunits. Three heterotrimers associate to form the active enzyme. Requires Ni cation as cofactor. In terms of processing, carboxylation allows a single lysine to coordinate two nickel ions.

Its subcellular location is the cytoplasm. It catalyses the reaction urea + 2 H2O + H(+) = hydrogencarbonate + 2 NH4(+). It functions in the pathway nitrogen metabolism; urea degradation; CO(2) and NH(3) from urea (urease route): step 1/1. This is Urease subunit alpha from Rhizobium leguminosarum bv. trifolii (strain WSM2304).